A 347-amino-acid chain; its full sequence is Phosphoribosylformylglycinamidine cyclo-ligase (347 aa).

The protein belongs to the AIR synthase family.

It localises to the cytoplasm. The catalysed reaction is 2-formamido-N(1)-(5-O-phospho-beta-D-ribosyl)acetamidine + ATP = 5-amino-1-(5-phospho-beta-D-ribosyl)imidazole + ADP + phosphate + H(+). Its pathway is purine metabolism; IMP biosynthesis via de novo pathway; 5-amino-1-(5-phospho-D-ribosyl)imidazole from N(2)-formyl-N(1)-(5-phospho-D-ribosyl)glycinamide: step 2/2. This chain is Phosphoribosylformylglycinamidine cyclo-ligase, found in Prochlorococcus marinus (strain MIT 9215).